A 398-amino-acid chain; its full sequence is Streptopain (398 aa).

The first 27 residues, Met1–Ala27, serve as a signal peptide directing secretion. The propeptide occupies Asp28–Lys145. The Nucleophile role is filled by Cys192. Cys192 is modified (cysteine methyl disulfide; in zymogen form). Residues Ser282 and Gly339 each contribute to the a protein site. His340 acts as the Proton acceptor in catalysis. The interval Arg368 to Gln390 is C-terminal active site loop.

The protein belongs to the peptidase C10 family. Monomer. In terms of processing, the mature protease is derived from the precursor sequence by cleavage, either in cis via an autocatalytic mechanism, or in trans by mature SpeB or host proteases (trypsin, plasmin or subtilisin). Maturation can involve a number of protein cleavage intermediates. Mature SpeB probably plays the most important role in protein maturation in physiological conditions. Methylthiolation at Cys-192 of the inactive zymogen form is probably involved in the mechanism of secretion of the proteinase into the culture fluid.

It is found in the secreted. Its subcellular location is the host extracellular space. It localises to the host cytoplasm. The enzyme catalyses Preferential cleavage with hydrophobic residues at P2, P1 and P1'.. Its activity is regulated as follows. Synthesized as an inactive zymogen to protect the intracellular components of the bacteria from proteolytic activity during protein production. Once secreted into the extracellular milieu, cleaved into the active protease: maturation can be mediated in cis by autocatalytic cleavage, or in trans by mature SpeB or host proteases. Protease activity is strongly inhibited by zinc and copper, which prevent its maturation into an active protease: inhibition by metal ions may be required to prevent proteolysis of streptococcal proteins. In terms of biological role, cysteine protease that acts as a key streptococcal virulence factor by cleaving host proteins involved in immune response. Triggers inflammation by mediating cleavage of host proteins, which can both promote host pathogenesis by triggering sterile inflammation and/or restrict streptococcal infection, depending on host immune statue and infection site. Cleaves host gasdermin-A (GSDMA) in epithelial cells, promoting GSDMA activation and formation of gasdermin pores, triggering pyroptosis. Pyroptosis triggers the elimination of the infected skin cell, depriving the pathogen of its protective niche, while inducing an inflammatory response. This ultimately prevents bacterial penetration of the epithelial barrier and a subsequent systemic dissemination of the pathogen. Also mediates cleavage of the cytokine precursor interleukin-1 beta (IL1B) to its mature form, resulting in inflammation and septic shock. SpeB-mediated maturation of IL1B plays a dual role depending on infection site: while IL1B inflammatory response prevents bacterial growth during invasive skin infections, it promotes streptococcal infection of the nasopharynx by disrupting colonization resistance mediated by the microbiota. Inhibits host autophagy be catalyzing cleavage and inactivation of key autophagy factors, such as CALCOCO2, NBR1 and SQSTM1. Cleaves and inhibits a number of complement factors, such as C2, C3-beta chain of C3, C4, C5 or SERPING1, thereby promoting evasion of host immunity. May also impair adaptive immunity by catalyzing cleavage and degradation of host immunoglobulins to promote immune system evasion; the relevance of this activity is however unsure in vivo. Catalyzes maturation and release of the peptide hormone bradykinin from the precursor Kininogen-1 (KNG1) to produce hypotension during septic shock. Also involved in bacterial translocation across the host epithelial barrier by mediating cleavage and degradation of host epithelial junction proteins, such as CDH1 and OCLN. Additionally, has been involved in degradation of fibronectin and vitronectin, two host extracellular matrix proteins involved in tissue integrity. Also able to catalyze cleavage and degradation of streptococcal proteins, such as C5a peptidase, EndoS or SmeZ. Degradation of streptococcal proteins is however strictly regulated to preserve integrity of other virulence factors. In Streptococcus pyogenes serotype M3 (strain ATCC BAA-595 / MGAS315), this protein is Streptopain (speB).